The following is a 391-amino-acid chain: Ferrochelatase (391 aa).

Fe cation is bound by residues histidine 196 and glutamate 281.

This sequence belongs to the ferrochelatase family.

The protein localises to the cytoplasm. It carries out the reaction heme b + 2 H(+) = protoporphyrin IX + Fe(2+). It participates in porphyrin-containing compound metabolism; protoheme biosynthesis; protoheme from protoporphyrin-IX: step 1/1. Its function is as follows. Catalyzes the ferrous insertion into protoporphyrin IX. This is Ferrochelatase from Prochlorococcus marinus subsp. pastoris (strain CCMP1986 / NIES-2087 / MED4).